Reading from the N-terminus, the 325-residue chain is Elongation factor P--(R)-beta-lysine ligase (325 aa).

Residue 76-78 coordinates substrate; that stretch reads SPE. Residues 100-102 and Asn-109 contribute to the ATP site; that span reads RNE. Residue Tyr-118 coordinates substrate. 244–245 contributes to the ATP binding site; the sequence is EL. A substrate-binding site is contributed by Glu-251. Gly-300 contacts ATP.

This sequence belongs to the class-II aminoacyl-tRNA synthetase family. EpmA subfamily. Homodimer.

It carries out the reaction D-beta-lysine + L-lysyl-[protein] + ATP = N(6)-((3R)-3,6-diaminohexanoyl)-L-lysyl-[protein] + AMP + diphosphate + H(+). Its function is as follows. With EpmB is involved in the beta-lysylation step of the post-translational modification of translation elongation factor P (EF-P). Catalyzes the ATP-dependent activation of (R)-beta-lysine produced by EpmB, forming a lysyl-adenylate, from which the beta-lysyl moiety is then transferred to the epsilon-amino group of a conserved specific lysine residue in EF-P. The polypeptide is Elongation factor P--(R)-beta-lysine ligase (Proteus mirabilis (strain HI4320)).